We begin with the raw amino-acid sequence, 237 residues long: Phosphoribosylaminoimidazole-succinocarboxamide synthase (237 aa).

This sequence belongs to the SAICAR synthetase family.

It carries out the reaction 5-amino-1-(5-phospho-D-ribosyl)imidazole-4-carboxylate + L-aspartate + ATP = (2S)-2-[5-amino-1-(5-phospho-beta-D-ribosyl)imidazole-4-carboxamido]succinate + ADP + phosphate + 2 H(+). It participates in purine metabolism; IMP biosynthesis via de novo pathway; 5-amino-1-(5-phospho-D-ribosyl)imidazole-4-carboxamide from 5-amino-1-(5-phospho-D-ribosyl)imidazole-4-carboxylate: step 1/2. This chain is Phosphoribosylaminoimidazole-succinocarboxamide synthase, found in Deinococcus deserti (strain DSM 17065 / CIP 109153 / LMG 22923 / VCD115).